Reading from the N-terminus, the 163-residue chain is Neurotrophin-3 (163 aa).

Positions 1-3 (IQS) are cleaved as a signal peptide. Positions 4–119 (TSMDQGILTE…VLNRTSRRKR (116 aa)) are excised as a propeptide. Residue Asn112 is glycosylated (N-linked (GlcNAc...) asparagine). Residues 112 to 132 (NRTSRRKREGKSHRGEYSVCD) form a disordered region. Residues 123–132 (SHRGEYSVCD) are compositionally biased toward basic and acidic residues.

This sequence belongs to the NGF-beta family.

The protein localises to the secreted. Its function is as follows. Seems to promote the survival of visceral and proprioceptive sensory neurons. This is Neurotrophin-3 (NTF3) from Exiliboa placata (Oaxacan dwarf boa).